A 459-amino-acid chain; its full sequence is Glutamate--tRNA ligase 2 (459 aa).

Positions 8–18 (PSPTGYIHIGN) match the 'HIGH' region motif. The short motif at 249 to 253 (GLSKR) is the 'KMSKS' region element. Residue Lys-252 participates in ATP binding.

The protein belongs to the class-I aminoacyl-tRNA synthetase family. Glutamate--tRNA ligase type 1 subfamily. In terms of assembly, monomer.

It localises to the cytoplasm. It carries out the reaction tRNA(Glu) + L-glutamate + ATP = L-glutamyl-tRNA(Glu) + AMP + diphosphate. Functionally, catalyzes the attachment of glutamate to tRNA(Glu) in a two-step reaction: glutamate is first activated by ATP to form Glu-AMP and then transferred to the acceptor end of tRNA(Glu). The sequence is that of Glutamate--tRNA ligase 2 from Bartonella henselae (strain ATCC 49882 / DSM 28221 / CCUG 30454 / Houston 1) (Rochalimaea henselae).